Here is a 264-residue protein sequence, read N- to C-terminus: Thymidylate synthase (264 aa).

Residues R21 and 126-127 (RR) each bind dUMP. Residue C146 is the Nucleophile of the active site. Residues 166 to 169 (RSAD), N177, and 207 to 209 (HLY) each bind dUMP. D169 contributes to the (6R)-5,10-methylene-5,6,7,8-tetrahydrofolate binding site. A263 serves as a coordination point for (6R)-5,10-methylene-5,6,7,8-tetrahydrofolate.

Belongs to the thymidylate synthase family. Bacterial-type ThyA subfamily. Homodimer.

It is found in the cytoplasm. It carries out the reaction dUMP + (6R)-5,10-methylene-5,6,7,8-tetrahydrofolate = 7,8-dihydrofolate + dTMP. It participates in pyrimidine metabolism; dTTP biosynthesis. In terms of biological role, catalyzes the reductive methylation of 2'-deoxyuridine-5'-monophosphate (dUMP) to 2'-deoxythymidine-5'-monophosphate (dTMP) while utilizing 5,10-methylenetetrahydrofolate (mTHF) as the methyl donor and reductant in the reaction, yielding dihydrofolate (DHF) as a by-product. This enzymatic reaction provides an intracellular de novo source of dTMP, an essential precursor for DNA biosynthesis. This Rhodopseudomonas palustris (strain HaA2) protein is Thymidylate synthase.